The primary structure comprises 194 residues: Inner membrane-spanning protein YciB (194 aa).

5 helical membrane-spanning segments follow: residues 3-23 (LFIEYFPLLIFFIINSIAGIY), 47-67 (IPAKQWIIFGLIVVFGGLTIY), 76-96 (WKVTIINAFFAAALLVSNTFF), 119-139 (LNLAWALFFLFCSGLNYYIAF), and 149-169 (FKVFGLTGLMFLFSITSILFL).

Belongs to the YciB family.

It is found in the cell inner membrane. Its function is as follows. Plays a role in cell envelope biogenesis, maintenance of cell envelope integrity and membrane homeostasis. The protein is Inner membrane-spanning protein YciB of Colwellia psychrerythraea (strain 34H / ATCC BAA-681) (Vibrio psychroerythus).